The primary structure comprises 163 residues: Phosphopantetheine adenylyltransferase (163 aa).

Position 11 (Thr-11) interacts with substrate. Residues 11-12 (TF) and His-19 contribute to the ATP site. 3 residues coordinate substrate: Lys-43, Leu-75, and Arg-89. Residues 90–92 (GLR), Glu-100, and 125–131 (YMFISAT) each bind ATP.

The protein belongs to the bacterial CoaD family. In terms of assembly, homohexamer. Mg(2+) serves as cofactor.

It localises to the cytoplasm. The catalysed reaction is (R)-4'-phosphopantetheine + ATP + H(+) = 3'-dephospho-CoA + diphosphate. It functions in the pathway cofactor biosynthesis; coenzyme A biosynthesis; CoA from (R)-pantothenate: step 4/5. Its function is as follows. Reversibly transfers an adenylyl group from ATP to 4'-phosphopantetheine, yielding dephospho-CoA (dPCoA) and pyrophosphate. This chain is Phosphopantetheine adenylyltransferase, found in Aromatoleum aromaticum (strain DSM 19018 / LMG 30748 / EbN1) (Azoarcus sp. (strain EbN1)).